Here is a 702-residue protein sequence, read N- to C-terminus: Ribosomal RNA large subunit methyltransferase K/L (702 aa).

Residues 43 to 154 enclose the THUMP domain; it reads LVYQSLMWSR…KETASIALDL (112 aa).

Belongs to the methyltransferase superfamily. RlmKL family.

It localises to the cytoplasm. It carries out the reaction guanosine(2445) in 23S rRNA + S-adenosyl-L-methionine = N(2)-methylguanosine(2445) in 23S rRNA + S-adenosyl-L-homocysteine + H(+). The enzyme catalyses guanosine(2069) in 23S rRNA + S-adenosyl-L-methionine = N(2)-methylguanosine(2069) in 23S rRNA + S-adenosyl-L-homocysteine + H(+). Its function is as follows. Specifically methylates the guanine in position 2445 (m2G2445) and the guanine in position 2069 (m7G2069) of 23S rRNA. This chain is Ribosomal RNA large subunit methyltransferase K/L, found in Escherichia coli O6:K15:H31 (strain 536 / UPEC).